A 421-amino-acid chain; its full sequence is Probable tRNA N6-adenosine threonylcarbamoyltransferase, mitochondrial (421 aa).

The transit peptide at 1–22 (MNIPKILNNNLVLKRIFCRNYS) directs the protein to the mitochondrion. A divalent metal cation contacts are provided by H133 and H137. Substrate-binding positions include 156–160 (LLSGG), D189, G208, E212, 308–309 (AN), and T336. A divalent metal cation is bound at residue D337.

Belongs to the KAE1 / TsaD family. In terms of assembly, homodimer. A divalent metal cation is required as a cofactor.

The protein localises to the mitochondrion. The enzyme catalyses L-threonylcarbamoyladenylate + adenosine(37) in tRNA = N(6)-L-threonylcarbamoyladenosine(37) in tRNA + AMP + H(+). Its function is as follows. Required for the formation of a threonylcarbamoyl group on adenosine at position 37 (t(6)A37) in mitochondrial tRNAs that read codons beginning with adenine. Probably involved in the transfer of the threonylcarbamoyl moiety of threonylcarbamoyl-AMP (TC-AMP) to the N6 group of A37. Involved in mitochondrial genome maintenance. This chain is Probable tRNA N6-adenosine threonylcarbamoyltransferase, mitochondrial, found in Caenorhabditis elegans.